A 206-amino-acid polypeptide reads, in one-letter code: Dephospho-CoA kinase (206 aa).

A DPCK domain is found at 4–200; that stretch reads TVALTGGIGS…ASYLKLASQF (197 aa). Position 12-17 (12-17) interacts with ATP; the sequence is GSGKST.

It belongs to the CoaE family.

The protein resides in the cytoplasm. The enzyme catalyses 3'-dephospho-CoA + ATP = ADP + CoA + H(+). Its pathway is cofactor biosynthesis; coenzyme A biosynthesis; CoA from (R)-pantothenate: step 5/5. In terms of biological role, catalyzes the phosphorylation of the 3'-hydroxyl group of dephosphocoenzyme A to form coenzyme A. This Salmonella typhimurium (strain LT2 / SGSC1412 / ATCC 700720) protein is Dephospho-CoA kinase.